We begin with the raw amino-acid sequence, 332 residues long: Fructose-1,6-bisphosphatase class 1 (332 aa).

Residues E93, D113, L115, and D116 each coordinate Mg(2+). Residues 116–119 (DGSS), N209, Y235, and K272 contribute to the substrate site. E278 contacts Mg(2+).

This sequence belongs to the FBPase class 1 family. Homotetramer. Mg(2+) is required as a cofactor.

The protein localises to the cytoplasm. The enzyme catalyses beta-D-fructose 1,6-bisphosphate + H2O = beta-D-fructose 6-phosphate + phosphate. Its pathway is carbohydrate biosynthesis; gluconeogenesis. This chain is Fructose-1,6-bisphosphatase class 1, found in Syntrophus aciditrophicus (strain SB).